Consider the following 331-residue polypeptide: Holliday junction branch migration complex subunit RuvB (331 aa).

The tract at residues 1-186 (MAKTMMQDRL…FGIVQRLEFY (186 aa)) is large ATPase domain (RuvB-L). ATP contacts are provided by residues Ile25, Arg26, Gly67, Lys70, Thr71, Thr72, 133 to 135 (EDF), Arg176, Tyr186, and Arg223. Thr71 is a Mg(2+) binding site. The tract at residues 187–257 (NIADLTTIVS…IAGSALDMLA (71 aa)) is small ATPAse domain (RuvB-S). A head domain (RuvB-H) region spans residues 260 to 331 (RRGLDHLDRR…LTQMAIDQMV (72 aa)). Arg296, Arg315, and Arg320 together coordinate DNA.

The protein belongs to the RuvB family. In terms of assembly, homohexamer. Forms an RuvA(8)-RuvB(12)-Holliday junction (HJ) complex. HJ DNA is sandwiched between 2 RuvA tetramers; dsDNA enters through RuvA and exits via RuvB. An RuvB hexamer assembles on each DNA strand where it exits the tetramer. Each RuvB hexamer is contacted by two RuvA subunits (via domain III) on 2 adjacent RuvB subunits; this complex drives branch migration. In the full resolvosome a probable DNA-RuvA(4)-RuvB(12)-RuvC(2) complex forms which resolves the HJ.

The protein localises to the cytoplasm. It catalyses the reaction ATP + H2O = ADP + phosphate + H(+). Functionally, the RuvA-RuvB-RuvC complex processes Holliday junction (HJ) DNA during genetic recombination and DNA repair, while the RuvA-RuvB complex plays an important role in the rescue of blocked DNA replication forks via replication fork reversal (RFR). RuvA specifically binds to HJ cruciform DNA, conferring on it an open structure. The RuvB hexamer acts as an ATP-dependent pump, pulling dsDNA into and through the RuvAB complex. RuvB forms 2 homohexamers on either side of HJ DNA bound by 1 or 2 RuvA tetramers; 4 subunits per hexamer contact DNA at a time. Coordinated motions by a converter formed by DNA-disengaged RuvB subunits stimulates ATP hydrolysis and nucleotide exchange. Immobilization of the converter enables RuvB to convert the ATP-contained energy into a lever motion, pulling 2 nucleotides of DNA out of the RuvA tetramer per ATP hydrolyzed, thus driving DNA branch migration. The RuvB motors rotate together with the DNA substrate, which together with the progressing nucleotide cycle form the mechanistic basis for DNA recombination by continuous HJ branch migration. Branch migration allows RuvC to scan DNA until it finds its consensus sequence, where it cleaves and resolves cruciform DNA. This chain is Holliday junction branch migration complex subunit RuvB, found in Psychrobacter arcticus (strain DSM 17307 / VKM B-2377 / 273-4).